The primary structure comprises 341 residues: uncharacterized protein (341 aa).

The span at 1–12 (NSRIAHVPKSKK) shows a compositional bias: basic residues. 2 disordered regions span residues 1-21 (NSRIAHVPKSKKPLNSASPRF) and 291-317 (KARMQMSGKNYQQRPSRTTSPAVNPED). The segment covering 297-312 (SGKNYQQRPSRTTSPA) has biased composition (polar residues).

This is an uncharacterized protein from Lachancea kluyveri (strain ATCC 58438 / CBS 3082 / BCRC 21498 / NBRC 1685 / JCM 7257 / NCYC 543 / NRRL Y-12651) (Yeast).